The primary structure comprises 306 residues: Homeobox protein CUP9 (306 aa).

Residues 75-123 are disordered; the sequence is PAINSGGTSTTATPTASTVETSKTSSSAMDTQSQYGSSKKSKSASDDAK. Residues 79 to 96 show a composition bias toward low complexity; it reads SGGTSTTATPTASTVETS. A compositionally biased stretch (polar residues) spans 97-110; sequence KTSSSAMDTQSQYG. Residues 162–224 constitute a DNA-binding region (homeobox; TALE-type); it reads NSGRRSNLPK…NVRRRKIFSD (63 aa).

It belongs to the TALE/CUP9 homeobox family.

The protein localises to the nucleus. Its function is as follows. Probable DNA-binding protein which plays a role in protecting yeast cells against copper toxicity. May regulate the expression of important copper homeostatic genes. The sequence is that of Homeobox protein CUP9 (CUP9) from Saccharomyces cerevisiae (strain ATCC 204508 / S288c) (Baker's yeast).